The chain runs to 388 residues: Succinate--CoA ligase [ADP-forming] subunit beta (388 aa).

An ATP-grasp domain is found at 9–244 (KELFARRGLP…VTQEDAREAH (236 aa)). ATP contacts are provided by residues Lys46, 53–55 (GRG), Glu99, Thr102, and Glu107. The Mg(2+) site is built by Asn199 and Asp213. Residues Asn264 and 321–323 (GIV) contribute to the substrate site.

It belongs to the succinate/malate CoA ligase beta subunit family. As to quaternary structure, heterotetramer of two alpha and two beta subunits. The cofactor is Mg(2+).

It catalyses the reaction succinate + ATP + CoA = succinyl-CoA + ADP + phosphate. The catalysed reaction is GTP + succinate + CoA = succinyl-CoA + GDP + phosphate. It functions in the pathway carbohydrate metabolism; tricarboxylic acid cycle; succinate from succinyl-CoA (ligase route): step 1/1. Succinyl-CoA synthetase functions in the citric acid cycle (TCA), coupling the hydrolysis of succinyl-CoA to the synthesis of either ATP or GTP and thus represents the only step of substrate-level phosphorylation in the TCA. The beta subunit provides nucleotide specificity of the enzyme and binds the substrate succinate, while the binding sites for coenzyme A and phosphate are found in the alpha subunit. The sequence is that of Succinate--CoA ligase [ADP-forming] subunit beta from Hamiltonella defensa subsp. Acyrthosiphon pisum (strain 5AT).